A 278-amino-acid chain; its full sequence is TATA box-binding protein-associated factor RNA polymerase I subunit D (278 aa).

Disordered stretches follow at residues 20 to 71 and 88 to 116; these read ANRS…SSFE and KKRY…RNPI. The span at 22–33 shows a compositional bias: polar residues; that stretch reads RSDNSSDSSLFK. S23 bears the Phosphoserine mark. Positions 88–99 are enriched in basic residues; sequence KKRYKKKKKRRY. Residues S138 and S234 each carry the phosphoserine modification.

As to quaternary structure, component of the transcription factor SL1/TIF-IB complex, composed of TBP and at least TAF1A, TAF1B, TAF1C and TAF1D. Interacts with UBTF.

It localises to the nucleus. Its function is as follows. Component of the transcription factor SL1/TIF-IB complex, which is involved in the assembly of the PIC (preinitiation complex) during RNA polymerase I-dependent transcription. The rate of PIC formation probably is primarily dependent on the rate of association of SL1/TIF-IB with the rDNA promoter. SL1/TIF-IB is involved in stabilization of nucleolar transcription factor 1/UBTF on rDNA. Formation of SL1/TIF-IB excludes the association of TBP with TFIID subunits. The protein is TATA box-binding protein-associated factor RNA polymerase I subunit D (TAF1D) of Homo sapiens (Human).